The primary structure comprises 289 residues: Diaminopimelate epimerase (289 aa).

Positions 11 and 78 each coordinate substrate. Cysteine 87 functions as the Proton donor in the catalytic mechanism. Substrate-binding positions include 88 to 89 (GN), asparagine 163, asparagine 199, and 217 to 218 (ER). Residue cysteine 226 is the Proton acceptor of the active site. Residue 227-228 (GT) participates in substrate binding.

Belongs to the diaminopimelate epimerase family. Homodimer.

The protein localises to the cytoplasm. The catalysed reaction is (2S,6S)-2,6-diaminopimelate = meso-2,6-diaminopimelate. The protein operates within amino-acid biosynthesis; L-lysine biosynthesis via DAP pathway; DL-2,6-diaminopimelate from LL-2,6-diaminopimelate: step 1/1. Catalyzes the stereoinversion of LL-2,6-diaminopimelate (L,L-DAP) to meso-diaminopimelate (meso-DAP), a precursor of L-lysine and an essential component of the bacterial peptidoglycan. This chain is Diaminopimelate epimerase, found in Rhodococcus jostii (strain RHA1).